Consider the following 311-residue polypeptide: Urease accessory protein UreD (311 aa).

It belongs to the UreD family. In terms of assembly, ureD, UreF and UreG form a complex that acts as a GTP-hydrolysis-dependent molecular chaperone, activating the urease apoprotein by helping to assemble the nickel containing metallocenter of UreC. The UreE protein probably delivers the nickel.

It localises to the cytoplasm. In terms of biological role, required for maturation of urease via the functional incorporation of the urease nickel metallocenter. This is Urease accessory protein UreD from Parasynechococcus marenigrum (strain WH8102).